The sequence spans 94 residues: Large ribosomal subunit protein bL28 (94 aa).

A disordered region spans residues 1–21 (MARRCEVTGRGTVSGNNVSHS). Over residues 11–20 (GTVSGNNVSH) the composition is skewed to polar residues.

Belongs to the bacterial ribosomal protein bL28 family.

The chain is Large ribosomal subunit protein bL28 from Leptospira borgpetersenii serovar Hardjo-bovis (strain JB197).